The sequence spans 210 residues: MTATETGTAVRRARIERRTRESDIVIDLDLDGTGQVDVDTGVPFFDHMLTALGSHASFDLTVRTKGDVEIEAHHTVEDTAIALGQALGQALGDKKGIRRFGDAFIPMDETLAHAAVDVSGRPYCVHTGEPDHLQHTTIAGNSVPYHTVINRHVFESLAMNARIALHVRVLYGRDPHHITEAQYKAVARALRQAVEPDPRVSGVPSTKGVL.

It belongs to the imidazoleglycerol-phosphate dehydratase family.

The protein resides in the cytoplasm. It catalyses the reaction D-erythro-1-(imidazol-4-yl)glycerol 3-phosphate = 3-(imidazol-4-yl)-2-oxopropyl phosphate + H2O. The protein operates within amino-acid biosynthesis; L-histidine biosynthesis; L-histidine from 5-phospho-alpha-D-ribose 1-diphosphate: step 6/9. The protein is Imidazoleglycerol-phosphate dehydratase of Mycobacterium marinum (strain ATCC BAA-535 / M).